We begin with the raw amino-acid sequence, 157 residues long: RNA pyrophosphohydrolase (157 aa).

Positions 6-149 (SYRPNVAAVI…KRKVYRRVID (144 aa)) constitute a Nudix hydrolase domain. Residues 43–64 (GGIDEGETPEDALYRELLEEIG) carry the Nudix box motif.

It belongs to the Nudix hydrolase family. RppH subfamily. The cofactor is a divalent metal cation.

In terms of biological role, accelerates the degradation of transcripts by removing pyrophosphate from the 5'-end of triphosphorylated RNA, leading to a more labile monophosphorylated state that can stimulate subsequent ribonuclease cleavage. The protein is RNA pyrophosphohydrolase of Sulfurovum sp. (strain NBC37-1).